A 379-amino-acid chain; its full sequence is 4-hydroxy-3-methylbut-2-enyl diphosphate reductase (379 aa).

Cysteine 39 is a binding site for [4Fe-4S] cluster. Residue histidine 69 coordinates (2E)-4-hydroxy-3-methylbut-2-enyl diphosphate. Histidine 69 is a binding site for dimethylallyl diphosphate. Residue histidine 69 coordinates isopentenyl diphosphate. Cysteine 130 contributes to the [4Fe-4S] cluster binding site. Histidine 158 provides a ligand contact to (2E)-4-hydroxy-3-methylbut-2-enyl diphosphate. A dimethylallyl diphosphate-binding site is contributed by histidine 158. Residue histidine 158 participates in isopentenyl diphosphate binding. Glutamate 160 (proton donor) is an active-site residue. Threonine 223 lines the (2E)-4-hydroxy-3-methylbut-2-enyl diphosphate pocket. Cysteine 261 contributes to the [4Fe-4S] cluster binding site. (2E)-4-hydroxy-3-methylbut-2-enyl diphosphate is bound by residues serine 290, serine 291, asparagine 292, and serine 352. Dimethylallyl diphosphate contacts are provided by serine 290, serine 291, asparagine 292, and serine 352. Isopentenyl diphosphate is bound by residues serine 290, serine 291, asparagine 292, and serine 352.

Belongs to the IspH family. Requires [4Fe-4S] cluster as cofactor.

It catalyses the reaction isopentenyl diphosphate + 2 oxidized [2Fe-2S]-[ferredoxin] + H2O = (2E)-4-hydroxy-3-methylbut-2-enyl diphosphate + 2 reduced [2Fe-2S]-[ferredoxin] + 2 H(+). The enzyme catalyses dimethylallyl diphosphate + 2 oxidized [2Fe-2S]-[ferredoxin] + H2O = (2E)-4-hydroxy-3-methylbut-2-enyl diphosphate + 2 reduced [2Fe-2S]-[ferredoxin] + 2 H(+). It participates in isoprenoid biosynthesis; dimethylallyl diphosphate biosynthesis; dimethylallyl diphosphate from (2E)-4-hydroxy-3-methylbutenyl diphosphate: step 1/1. It functions in the pathway isoprenoid biosynthesis; isopentenyl diphosphate biosynthesis via DXP pathway; isopentenyl diphosphate from 1-deoxy-D-xylulose 5-phosphate: step 6/6. Functionally, catalyzes the conversion of 1-hydroxy-2-methyl-2-(E)-butenyl 4-diphosphate (HMBPP) into a mixture of isopentenyl diphosphate (IPP) and dimethylallyl diphosphate (DMAPP). Acts in the terminal step of the DOXP/MEP pathway for isoprenoid precursor biosynthesis. The polypeptide is 4-hydroxy-3-methylbut-2-enyl diphosphate reductase (Synechocystis sp. (strain ATCC 27184 / PCC 6803 / Kazusa)).